Here is a 345-residue protein sequence, read N- to C-terminus: Phosphate acyltransferase (345 aa).

The protein belongs to the PlsX family. In terms of assembly, homodimer. Probably interacts with PlsY.

It localises to the cytoplasm. The catalysed reaction is a fatty acyl-[ACP] + phosphate = an acyl phosphate + holo-[ACP]. It functions in the pathway lipid metabolism; phospholipid metabolism. Catalyzes the reversible formation of acyl-phosphate (acyl-PO(4)) from acyl-[acyl-carrier-protein] (acyl-ACP). This enzyme utilizes acyl-ACP as fatty acyl donor, but not acyl-CoA. This Wolbachia sp. subsp. Brugia malayi (strain TRS) protein is Phosphate acyltransferase.